The chain runs to 310 residues: MNKPLPKAIFLMGPTASGKTNLAIELRKRFPVELISVDSALIYKGMDIGTAKPNAEELLQAPHRLIDILDPTESYSAADFRRDALKEMDDIVAQGKIPLLVGGTMLYYKALLEGLSPLPAADADIRAQIEQEAEQFGWEAMHDQLKTIDPVSAERIHPNDPQRLSRALEVFRISGKTLTELTQIKGDALPYEVHQFAIAPKERAEIHRRIELRFANMMEEGFEAEARALYERDDLHADLPSIRCVGYRQMWDYFDGEGTLDEAVFRGICATRQLAKRQITWLRSWKELTWLDSDDIDGALELISTQLEKK.

13-20 (GPTASGKT) is an ATP binding site. Position 15–20 (15–20 (TASGKT)) interacts with substrate. Interaction with substrate tRNA regions lie at residues 38–41 (DSAL), 162–166 (QRLSR), 243–248 (RCVGYR), and 276–283 (KRQITWLR).

It belongs to the IPP transferase family. In terms of assembly, monomer. Mg(2+) serves as cofactor.

It carries out the reaction adenosine(37) in tRNA + dimethylallyl diphosphate = N(6)-dimethylallyladenosine(37) in tRNA + diphosphate. Catalyzes the transfer of a dimethylallyl group onto the adenine at position 37 in tRNAs that read codons beginning with uridine, leading to the formation of N6-(dimethylallyl)adenosine (i(6)A). This chain is tRNA dimethylallyltransferase, found in Aliivibrio fischeri (strain ATCC 700601 / ES114) (Vibrio fischeri).